A 362-amino-acid polypeptide reads, in one-letter code: MSNIIVELKHVGKRYGDTQVLKDINIEIEQGKFYTLLGPSGSGKTTILRAIAGFLDVSEGEVLFDGKRINDVPANQRKVNTVFQDYALFPHLNVFDNVAFGLRLHRMSKQDIQTKVEDALKMVRLQGYADREISELSGGQQQRVAIARAIVLEPQVLLLDEPLSALDAKLRKDMQYELRELQERLGITFLFVTHDQEEALALSDEIFVMNDGEVQQSGTPVDIYDEPVNHFVADFIGESNIIQGHMIKDFLVEFNGKRFECADAGMRPNEPVEVVLRPEDLDITPANSGKVNVEVDTQLFRGDYYEIVGYDDLKNEWLIHSTNPAKDGETVGLTFDPEDIHVMRLNESEEDFDARLETYEGE.

The 231-residue stretch at 6-236 (VELKHVGKRY…PVNHFVADFI (231 aa)) folds into the ABC transporter domain. 38-45 (GPSGSGKT) is an ATP binding site.

The protein belongs to the ABC transporter superfamily. Spermidine/putrescine importer (TC 3.A.1.11.1) family. The complex is composed of two ATP-binding proteins (PotA), two transmembrane proteins (PotB and PotC) and a solute-binding protein (PotD).

It is found in the cell membrane. The enzyme catalyses ATP + H2O + polyamine-[polyamine-binding protein]Side 1 = ADP + phosphate + polyamineSide 2 + [polyamine-binding protein]Side 1.. Its function is as follows. Part of the ABC transporter complex PotABCD involved in spermidine/putrescine import. Responsible for energy coupling to the transport system. This chain is Spermidine/putrescine import ATP-binding protein PotA, found in Lacticaseibacillus paracasei (strain ATCC 334 / BCRC 17002 / CCUG 31169 / CIP 107868 / KCTC 3260 / NRRL B-441) (Lactobacillus paracasei).